A 376-amino-acid polypeptide reads, in one-letter code: N-acetyldiaminopimelate deacetylase (376 aa).

Residue Asp-69 is part of the active site. Glu-128 acts as the Proton acceptor in catalysis.

It belongs to the peptidase M20A family. N-acetyldiaminopimelate deacetylase subfamily.

The enzyme catalyses N-acetyl-(2S,6S)-2,6-diaminopimelate + H2O = (2S,6S)-2,6-diaminopimelate + acetate. It functions in the pathway amino-acid biosynthesis; L-lysine biosynthesis via DAP pathway; LL-2,6-diaminopimelate from (S)-tetrahydrodipicolinate (acetylase route): step 3/3. In terms of biological role, catalyzes the conversion of N-acetyl-diaminopimelate to diaminopimelate and acetate. This chain is N-acetyldiaminopimelate deacetylase, found in Streptococcus uberis (strain ATCC BAA-854 / 0140J).